Reading from the N-terminus, the 660-residue chain is MEVTRQNFKEVLPEVCNAVQEADFISIDGEFTGISDGPSVSALTNGLDTPEERYTKLRKHSMNFLLFQFGVCTFRYDQNQSTYITKAFNFYIFPKPFSRTSPDIKFICQSSSIDFLASQGFDFNKVFRSGIPYLNQEEECQLREQYEERRGQMNGAGPVSYTPPSGTGVCNVPEDQREFIRSVEEKVEALLKNTDQTLDLEPCTGFQRKLIYQTLNSKYSKGLHVEALETEKKERFIQISKVDDEERRRREQQKQQREQEELNDAVGFSRVIRAISKSGKLVVGHNMLLDVMHTIHQFCGPLPEELDDFKEVAMTVFPRLLDTKLMASTQPFKEIIHNTSLAELHKQLRQKPFRPPTTECPEGLQSYDTSTEQLHEAGYDAFITGLCFISMANYLGSFLTPPKSHISARSKLLEPFYNKLFLMRVIDIPYLNMSGPDLQPKRDHVLYVTFPKEWKTSDLYQLFSAFGNIQVSWVDDTSAFVSLSQTEQVQIAMNTSRYAESYRIQTYAEYLQSRQKNTHSSRKWASDGWADTSYPSVAMTTASGYSHTDNWHQAVKRSISPSLDEQNHGADSSWTNYSVKKIKTEGSCTQTYADVAGSCDWPRLQADEGGASVSPVAEEAELDEFSANQSQGKRSRKHKKRKSDASETTPPALFDVPQVW.

Residues Asp28 and Glu30 each contribute to the a divalent metal cation site. Positions 177–243 (REFIRSVEEK…ERFIQISKVD (67 aa)) constitute an R3H domain. A divalent metal cation-binding residues include Asp290 and Asp380. A phosphoserine mark is found at Ser560 and Ser614. The tract at residues 606 to 660 (ADEGGASVSPVAEEAELDEFSANQSQGKRSRKHKKRKSDASETTPPALFDVPQVW) is disordered. Residues 633–642 (KRSRKHKKRK) are compositionally biased toward basic residues. Ser643 bears the Phosphoserine mark. Thr649 carries the post-translational modification Phosphothreonine.

Belongs to the CAF1 family. It depends on a divalent metal cation as a cofactor.

It is found in the cytoplasm. The protein localises to the nucleus. The catalysed reaction is Exonucleolytic cleavage of poly(A) to 5'-AMP.. 3'-exoribonuclease that has a preference for poly(A) tails of mRNAs, thereby efficiently degrading poly(A) tails. Exonucleolytic degradation of the poly(A) tail is often the first step in the decay of eukaryotic mRNAs and is also used to silence certain maternal mRNAs translationally during oocyte maturation and early embryonic development. The sequence is that of Poly(A)-specific ribonuclease PARN (parn) from Danio rerio (Zebrafish).